The following is a 397-amino-acid chain: MAGYEYVSPEQLAGFDKHKYSAVDTNPLSLYVMHPFWNTIVKVFPTWLAPNLITFSGFLLVVFNFLLMAYFDPDFYASAPGHKHVPDWVWIVVGILNFVAYTLDGVDGKQARRTNSSTPLGELFDHGLDNWSYVYFVVTVYSIFGRGSTGVSVFVLYLLLWVVLFSFILSHWEKYNTGILFLPWGYDISQVTISFVYIVTAVVGVEAWYEPFLFNFLYRDLFTAMIIGCALCVTLPMSLLNFFRSYKNNTLKLNSVYEAMVPLFSPCLLFILSTAWILWSPSDILELHPRVFYFMVGTAFANSTCQLIVCQMSSTRCPTLNWLLVPLFLVVLVVNLGVASYVESILLYTLTTAFTLAHIHYGVRVVKQLSSHFQIYPFSLRKPNSDULGMEEKNIGL.

An N-acetylalanine modification is found at Ala2. 10 consecutive transmembrane segments (helical) span residues 47–69, 84–103, 123–145, 150–172, 179–201, 221–243, 256–278, 291–310, 317–339, and 344–366; these read WLAPNLITFSGFLLVVFNFLLMA, HVPDWVWIVVGILNFVAYTL, LFDHGLDNWSYVYFVVTVYSIFG, GVSVFVLYLLLWVVLFSFILSHW, ILFLPWGYDISQVTISFVYIVTA, LFTAMIIGCALCVTLPMSLLNFF, VYEAMVPLFSPCLLFILSTAWIL, VFYFMVGTAFANSTCQLIVC, CPTLNWLLVPLFLVVLVVNLGVA, and SILLYTLTTAFTLAHIHYGVRVV. Position 387 (Sec387) is a non-standard amino acid, selenocysteine.

It belongs to the CDP-alcohol phosphatidyltransferase class-I family. The cofactor is Mg(2+). It depends on Mn(2+) as a cofactor.

Its subcellular location is the endoplasmic reticulum membrane. The catalysed reaction is CDP-ethanolamine + a 1,2-diacyl-sn-glycerol = a 1,2-diacyl-sn-glycero-3-phosphoethanolamine + CMP + H(+). It carries out the reaction 1-O-alkyl-2-acyl-sn-glycerol + CDP-ethanolamine = a 1-O-alkyl-2-acyl-sn-glycero-3-phosphoethanolamine + CMP + H(+). It functions in the pathway phospholipid metabolism; phosphatidylethanolamine biosynthesis; phosphatidylethanolamine from ethanolamine: step 3/3. Functionally, ethanolaminephosphotransferase that catalyzes the transfer of phosphoethanolamine (PE) from CDP-ethanolamine to lipid acceptors, the final step in the synthesis of PE via the 'Kennedy' pathway. PE is the second most abundant phospholipid of membranes in mammals and is involved in various membrane-related cellular processes. The enzyme is critical for the synthesis of several PE species and also catalyzes the synthesis of plasmanyl-PE, a lipid required for proper myelination and neurodevelopment, from 1-alkyl-2-acylglycerol. The sequence is that of Ethanolaminephosphotransferase 1 from Pongo abelii (Sumatran orangutan).